We begin with the raw amino-acid sequence, 108 residues long: DNA-directed RNA polymerase III subunit RPC10 (108 aa).

C5, C8, C25, C28, C69, and C72 together coordinate Zn(2+). A C4-type zinc finger spans residues 5–28 (CPGCGNGLIVEEGQRCHRFACNTC). A TFIIS-type zinc finger spans residues 65–107 (TAEPCPKCEHPRAYFMQLQTRYADEPMTTFYKCCNAQCGHRWR). The short motif at 88–89 (DE) is the Hairpin element. Residues C98 and C102 each coordinate Zn(2+).

This sequence belongs to the archaeal RpoM/eukaryotic RPA12/RPB9/RPC11 RNA polymerase family. In terms of assembly, component of the RNA polymerase III complex consisting of 17 subunits: a ten-subunit horseshoe-shaped catalytic core composed of POLR3A/RPC1, POLR3B/RPC2, POLR1C/RPAC1, POLR1D/RPAC2, POLR3K/RPC10, POLR2E/RPABC1, POLR2F/RPABC2, POLR2H/RPABC3, POLR2K/RPABC4 and POLR2L/RPABC5; a mobile stalk composed of two subunits POLR3H/RPC8 and CRCP/RPC9, protruding from the core and functioning primarily in transcription initiation; and additional subunits homologous to general transcription factors of the RNA polymerase II machinery, POLR3C/RPC3-POLR3F/RPC6-POLR3G/RPC7 heterotrimer required for transcription initiation and POLR3D/RPC4-POLR3E/RPC5 heterodimer involved in both transcription initiation and termination.

It is found in the nucleus. Core component of RNA polymerase III (Pol III) which synthesizes small non-coding RNAs using the four ribonucleoside triphosphates as substrates. Can mediate Pol I proofreading of the nascent RNA transcript. Anchors into the Pol III active site to constantly monitor transcription fidelity, cleaves mis-incorporated 5'-ribonucleotides and restarts the transcription process. Once Pol III reaches the poly(dT) termination signal, can induce Pol III clamp opening and transcription termination. Pol III plays an important role in sensing and limiting infection by intracellular bacteria and DNA viruses. Acts as a nuclear and cytosolic DNA sensor involved in innate immune response. Can sense non-self dsDNA that serves as template for transcription into dsRNA. The non-self RNA polymerase III transcripts, such as Epstein-Barr virus-encoded RNAs (EBERs) induce type I interferon and NF-kappa-B through the RIG-I pathway. The sequence is that of DNA-directed RNA polymerase III subunit RPC10 (POLR3K) from Bos taurus (Bovine).